Consider the following 233-residue polypeptide: Large ribosomal subunit protein uL1 (233 aa).

It belongs to the universal ribosomal protein uL1 family. Part of the 50S ribosomal subunit.

In terms of biological role, binds directly to 23S rRNA. The L1 stalk is quite mobile in the ribosome, and is involved in E site tRNA release. Functionally, protein L1 is also a translational repressor protein, it controls the translation of the L11 operon by binding to its mRNA. This is Large ribosomal subunit protein uL1 from Polynucleobacter asymbioticus (strain DSM 18221 / CIP 109841 / QLW-P1DMWA-1) (Polynucleobacter necessarius subsp. asymbioticus).